Reading from the N-terminus, the 155-residue chain is Small ribosomal subunit protein uS9 (155 aa).

The protein belongs to the universal ribosomal protein uS9 family.

This Sinorhizobium medicae (strain WSM419) (Ensifer medicae) protein is Small ribosomal subunit protein uS9.